A 101-amino-acid chain; its full sequence is Ascorbate-specific PTS system EIIB component (101 aa).

Positions 3–96 (VRILAVCGNG…KLLKVIKEHF (94 aa)) constitute a PTS EIIB type-2 domain. The active-site Phosphocysteine intermediate is the Cys-9. At Cys-9 the chain carries Phosphocysteine.

It localises to the cytoplasm. The catalysed reaction is N(pros)-phospho-L-histidyl-[protein] + L-ascorbate(out) = L-ascorbate 6-phosphate(in) + L-histidyl-[protein]. Its function is as follows. The phosphoenolpyruvate-dependent sugar phosphotransferase system (sugar PTS), a major carbohydrate active transport system, catalyzes the phosphorylation of incoming sugar substrates concomitantly with their translocation across the cell membrane. The enzyme II UlaABC PTS system is involved in ascorbate transport. The chain is Ascorbate-specific PTS system EIIB component (ulaB) from Shigella dysenteriae serotype 1 (strain Sd197).